The primary structure comprises 157 residues: Large ribosomal subunit protein uL11 (157 aa).

Disordered regions lie at residues 1-28 and 138-157; these read MAGT…GPTP and NNPR…DILK. The segment covering 139–157 has biased composition (basic and acidic residues); that stretch reads NPREFKSRMEDGEYDDILK.

It belongs to the universal ribosomal protein uL11 family. In terms of assembly, part of the ribosomal stalk of the 50S ribosomal subunit. Interacts with L10 and the large rRNA to form the base of the stalk. L10 forms an elongated spine to which L12 dimers bind in a sequential fashion forming a multimeric L10(L12)X complex.

Forms part of the ribosomal stalk which helps the ribosome interact with GTP-bound translation factors. This Haloquadratum walsbyi (strain DSM 16790 / HBSQ001) protein is Large ribosomal subunit protein uL11.